The chain runs to 368 residues: Homoserine O-acetyltransferase (368 aa).

The region spanning 43–354 (NVVVVCHALT…DYGHDAFLVE (312 aa)) is the AB hydrolase-1 domain. The active-site Nucleophile is the Ser148. Arg220 is a binding site for substrate. Catalysis depends on residues Asp314 and His348. Residue Asp349 coordinates substrate.

The protein belongs to the AB hydrolase superfamily. MetX family. Homodimer.

It localises to the cytoplasm. It catalyses the reaction L-homoserine + acetyl-CoA = O-acetyl-L-homoserine + CoA. Its pathway is amino-acid biosynthesis; L-methionine biosynthesis via de novo pathway; O-acetyl-L-homoserine from L-homoserine: step 1/1. Transfers an acetyl group from acetyl-CoA to L-homoserine, forming acetyl-L-homoserine. In Sulfurimonas autotrophica (strain ATCC BAA-671 / DSM 16294 / JCM 11897 / OK10), this protein is Homoserine O-acetyltransferase.